We begin with the raw amino-acid sequence, 138 residues long: ATP synthase epsilon chain (138 aa).

The protein belongs to the ATPase epsilon chain family. As to quaternary structure, F-type ATPases have 2 components, CF(1) - the catalytic core - and CF(0) - the membrane proton channel. CF(1) has five subunits: alpha(3), beta(3), gamma(1), delta(1), epsilon(1). CF(0) has three main subunits: a, b and c.

It is found in the cell inner membrane. Produces ATP from ADP in the presence of a proton gradient across the membrane. This Psychrobacter arcticus (strain DSM 17307 / VKM B-2377 / 273-4) protein is ATP synthase epsilon chain.